Here is a 237-residue protein sequence, read N- to C-terminus: Ribonuclease PH (237 aa).

Phosphate contacts are provided by residues Arg-86 and 124-126; that span reads GTR.

The protein belongs to the RNase PH family. As to quaternary structure, homohexameric ring arranged as a trimer of dimers.

The enzyme catalyses tRNA(n+1) + phosphate = tRNA(n) + a ribonucleoside 5'-diphosphate. In terms of biological role, phosphorolytic 3'-5' exoribonuclease that plays an important role in tRNA 3'-end maturation. Removes nucleotide residues following the 3'-CCA terminus of tRNAs; can also add nucleotides to the ends of RNA molecules by using nucleoside diphosphates as substrates, but this may not be physiologically important. Probably plays a role in initiation of 16S rRNA degradation (leading to ribosome degradation) during starvation. This Bradyrhizobium diazoefficiens (strain JCM 10833 / BCRC 13528 / IAM 13628 / NBRC 14792 / USDA 110) protein is Ribonuclease PH.